Consider the following 119-residue polypeptide: MTALMNHIYIDNPLISNSTNNVTHELLIDLHELYNDGEISRIVLLRTLVTQSADDATWIINLTDDVLNGLPLLKKRDRYTTQCHSTNMASTYDCDTGANAVGARGGATLAADYRGDWGG.

This is an uncharacterized protein from Schizosaccharomyces pombe (strain 972 / ATCC 24843) (Fission yeast).